Consider the following 113-residue polypeptide: Class I hydrophobin POH1 (113 aa).

An N-terminal signal peptide occupies residues 1 to 26 (MFSIRISTVVLAASALLAVAIPMTNT). Cystine bridges form between cysteine 31/cysteine 93, cysteine 38/cysteine 87, cysteine 39/cysteine 74, and cysteine 94/cysteine 107.

It belongs to the fungal hydrophobin family. As to quaternary structure, self-assembles to form functional amyloid fibrils called rodlets. Self-assembly into fibrillar rodlets occurs spontaneously at hydrophobic:hydrophilic interfaces and the rodlets further associate laterally to form amphipathic monolayers. In terms of tissue distribution, expressed in the fruiting bodies but not in vegetative mycelium.

The protein localises to the secreted. It is found in the cell wall. In terms of biological role, aerial growth, conidiation, and dispersal of filamentous fungi in the environment rely upon a capability of their secreting small amphipathic proteins called hydrophobins (HPBs) with low sequence identity. Class I can self-assemble into an outermost layer of rodlet bundles on aerial cell surfaces, conferring cellular hydrophobicity that supports fungal growth, development and dispersal; whereas Class II form highly ordered films at water-air interfaces through intermolecular interactions but contribute nothing to the rodlet structure. POH1 is a class I hydrophobin that is involved in the formation of mycelium knots and subsequent fruiting bodies. In Pleurotus ostreatus (Oyster mushroom), this protein is Class I hydrophobin POH1.